The sequence spans 95 residues: MQALIEISDKQFLVQEGDKIFVPKQKAVAGDVIEVKSLMKVGQADSALSEGTAKVKVLDHVRDETIIVFRKKRRKRFQRRNGHRQHMTQVEVMSI.

Belongs to the bacterial ribosomal protein bL21 family. As to quaternary structure, part of the 50S ribosomal subunit. Contacts protein L20.

This protein binds to 23S rRNA in the presence of protein L20. The protein is Large ribosomal subunit protein bL21 of Prosthecochloris vibrioformis (Chlorobium vibrioforme).